A 249-amino-acid chain; its full sequence is NAD kinase (249 aa).

D49 serves as the catalytic Proton acceptor. NAD(+) is bound by residues D49–G50, R54, N115–E116, K126, R143, D145, I153, T156–S161, A180, and Q211.

The protein belongs to the NAD kinase family. Homotetramer. It depends on a divalent metal cation as a cofactor.

The protein localises to the cytoplasm. It catalyses the reaction NAD(+) + ATP = ADP + NADP(+) + H(+). Functionally, involved in the regulation of the intracellular balance between NAD(H) and NADP(H), and is a key enzyme in the biosynthesis of NADP. Catalyzes specifically the phosphorylation on 2'-hydroxyl of the adenosine moiety of NAD to yield NADP. The protein is NAD kinase of Archaeoglobus fulgidus (strain ATCC 49558 / DSM 4304 / JCM 9628 / NBRC 100126 / VC-16).